The sequence spans 328 residues: uncharacterized protein (328 aa).

This is an uncharacterized protein from Saccharomyces cerevisiae (strain ATCC 204508 / S288c) (Baker's yeast).